The following is a 155-amino-acid chain: Ribosome maturation factor RimP (155 aa).

Belongs to the RimP family.

The protein localises to the cytoplasm. Required for maturation of 30S ribosomal subunits. This is Ribosome maturation factor RimP from Prochlorococcus marinus (strain MIT 9301).